A 253-amino-acid chain; its full sequence is Tetraspanin-11 (253 aa).

The next 3 helical transmembrane spans lie at 19–39, 63–83, and 93–113; these read LLFIFNFFFWVGGAAVMAVGI, ILIFVGGLVMTTGFLGFGAII, and YFCLLLVIFLVELVAGVLAHV. N127 is a glycosylation site (N-linked (GlcNAc...) asparagine). Residues 220 to 240 form a helical membrane-spanning segment; that stretch reads LLLMGAVGIGVACLQICGMVL.

The protein belongs to the tetraspanin (TM4SF) family.

It is found in the membrane. The sequence is that of Tetraspanin-11 (Tspan11) from Mus musculus (Mouse).